Here is a 264-residue protein sequence, read N- to C-terminus: Thymidylate synthase (264 aa).

Arginine 21 is a dUMP binding site. Histidine 51 provides a ligand contact to (6R)-5,10-methylene-5,6,7,8-tetrahydrofolate. 126–127 (RR) contacts dUMP. Catalysis depends on cysteine 146, which acts as the Nucleophile. DUMP is bound by residues 166–169 (RSAD), asparagine 177, and 207–209 (HLY). Residue aspartate 169 participates in (6R)-5,10-methylene-5,6,7,8-tetrahydrofolate binding. (6R)-5,10-methylene-5,6,7,8-tetrahydrofolate is bound at residue alanine 263.

Belongs to the thymidylate synthase family. Bacterial-type ThyA subfamily. In terms of assembly, homodimer.

The protein resides in the cytoplasm. The enzyme catalyses dUMP + (6R)-5,10-methylene-5,6,7,8-tetrahydrofolate = 7,8-dihydrofolate + dTMP. It functions in the pathway pyrimidine metabolism; dTTP biosynthesis. Functionally, catalyzes the reductive methylation of 2'-deoxyuridine-5'-monophosphate (dUMP) to 2'-deoxythymidine-5'-monophosphate (dTMP) while utilizing 5,10-methylenetetrahydrofolate (mTHF) as the methyl donor and reductant in the reaction, yielding dihydrofolate (DHF) as a by-product. This enzymatic reaction provides an intracellular de novo source of dTMP, an essential precursor for DNA biosynthesis. The polypeptide is Thymidylate synthase (Thiobacillus denitrificans (strain ATCC 25259 / T1)).